The sequence spans 1959 residues: Sodium channel protein type 10 subunit alpha (1959 aa).

Residues 1–125 (MEFPIGSVGT…FNLIRRTAIK (125 aa)) are Cytoplasmic-facing. The interval 30 to 53 (AHGAAKKARAKHGERKGQDEKPRP) is disordered. The segment covering 33–43 (AAKKARAKHGE) has biased composition (basic residues). The span at 44–53 (RKGQDEKPRP) shows a compositional bias: basic and acidic residues. The stretch at 116–404 (FNLIRRTAIK…VTMAYEEQNQ (289 aa)) is one I repeat. A helical membrane pass occupies residues 126–149 (VSVHAWFSIFITITILFNCVCMTQ). Topologically, residues 150–154 (NDLPE) are extracellular. The chain crosses the membrane as a helical span at residues 155 to 174 (KIEYAFTVIYTFEALIKILA). Topologically, residues 175 to 187 (RGFCLNEFTYLRD) are cytoplasmic. Residues 188-206 (PWNWLDFSVITLAYVGAAI) form a helical membrane-spanning segment. Residues 207 to 212 (DLRGIS) lie on the Extracellular side of the membrane. A helical; Voltage-sensor transmembrane segment spans residues 213 to 232 (GLRTFRVLRALKTVSVIPGL). Over 233–248 (KVIVGALIHSVRKLAD) the chain is Cytoplasmic. The helical transmembrane segment at 249–272 (VTILTVFCLSVFALVGLQLFKGNL) threads the bilayer. Residues 273-340 (KNKCIKRSTD…PDFNYTSFDS (68 aa)) lie on the Extracellular side of the membrane. A disulfide bridge links Cys-276 with Cys-318. Asn-288, Asn-311, and Asn-334 each carry an N-linked (GlcNAc...) asparagine glycan. The pore-forming intramembrane region spans 341-365 (FAWAFLSLFRLMTQDSWERLYQQTL). Residues 366 to 372 (RASGKMY) are Extracellular-facing. Residues 373–398 (MVFFVLVIFLGSFYLVNLILAVVTMA) traverse the membrane as a helical segment. Residues 399 to 659 (YEEQNQATIA…KWMKFKMVLF (261 aa)) lie on the Cytoplasmic side of the membrane. Phosphoserine occurs at positions 440, 443, 466, and 478. Disordered regions lie at residues 442–484 (HSHN…YNQR) and 510–578 (SQDV…ELTT). Residues 475–484 (SPQSDPYNQR) are compositionally biased toward polar residues. The span at 523–533 (GVFHGDHESHR) shows a compositional bias: basic and acidic residues. 2 positions are modified to phosphoserine: Ser-612 and Ser-615. The stretch at 647 to 911 (CCPKWMKFKM…EDDGEVNNLQ (265 aa)) is one II repeat. The helical transmembrane segment at 660 to 684 (ELVTDPFAELTITLCIVVNTIFMAM) threads the bilayer. At 685–695 (EHYPMTDAFDA) the chain is on the extracellular side. A helical membrane pass occupies residues 696–719 (MLQAGNIVFTVFFTMEMAFKIIAF). Residues 720 to 727 (DPYYYFQK) are Cytoplasmic-facing. A helical transmembrane segment spans residues 728 to 747 (KWNVFDCVIVTVSLLELSIA). Over 748–753 (KKGSLS) the chain is Extracellular. Residues 754 to 773 (VLRTFRLLRVFKLAKSWPTL) traverse the membrane as a helical; Voltage-sensor segment. At 774-789 (NTLIKIIGNSVGALGN) the chain is on the cytoplasmic side. A helical membrane pass occupies residues 790-810 (LTFILAIIVFIFALVGKQLLG). Residues 811–834 (EDYGCRKDGTALWNEGQLRWHMCD) are Extracellular-facing. The pore-forming intramembrane region spans 835 to 855 (FFHSFLVIFRILCGEWIENMW). Topologically, residues 856–864 (VCMQVSEKS) are extracellular. The cysteines at positions 857 and 866 are disulfide-linked. The helical transmembrane segment at 865–890 (ICLILFLTVMVLGNLVVLNLFIALLL) threads the bilayer. At 891–1149 (NSFSADNLTA…GWQVRKTCYR (259 aa)) the chain is on the cytoplasmic side. A compositionally biased stretch (acidic residues) spans 1004 to 1016 (GESDLDELEEDIE). 2 disordered regions span residues 1004 to 1034 (GESD…QQDQ) and 1071 to 1097 (ATPQ…PDPE). The stretch at 1142 to 1451 (QVRKTCYRIV…KKYYNAMKKL (310 aa)) is one III repeat. A helical membrane pass occupies residues 1150–1173 (IVEHSWFESFIIFMILLSSGALAF). Residues 1174 to 1186 (EDNYLEQKPRVKS) are Extracellular-facing. A helical membrane pass occupies residues 1187–1212 (MLEYTDRVFTFIFVFEMLLKWVAYGF). Topologically, residues 1213–1218 (KKYFTN) are cytoplasmic. The chain crosses the membrane as a helical span at residues 1219 to 1240 (AWCWLDFLIVNISLTSLIAKIL). Over 1241-1244 (DYSD) the chain is Extracellular. The chain crosses the membrane as a helical; Voltage-sensor span at residues 1245–1266 (VASLKALRTLRALRPLRALSRF). The Cytoplasmic portion of the chain corresponds to 1267–1285 (EGMRVVVDALVGAIPSIMN). Residues 1286-1313 (VLLVCLIFWLIFSIMGVNLFAGKFSRCI) form a helical membrane-spanning segment. The Extracellular portion of the chain corresponds to 1314-1355 (DTSNNPFSVVNSTIVNNKSECRNQNHTGHFFWVNVKVNFDNV). Residues 1356 to 1377 (AMGYLALLQVATFKGWMDIMYA) constitute an intramembrane region (pore-forming). At 1378-1393 (AVDSREINSQPQWEDN) the chain is on the extracellular side. The helical transmembrane segment at 1394–1420 (LYMYLYFVVFIIFGGFFTLNLFVGVII) threads the bilayer. Residues 1421–1473 (DNFNQQKKKLGGQDIFMTEEQKKYYNAMKKLGSKKPQKPIPRPLNKYQGFVFD) lie on the Cytoplasmic side of the membrane. Ser-1453 bears the Phosphoserine; by PKC mark. The IV repeat unit spans residues 1460 to 1759 (IPRPLNKYQG…WEKFDPEATQ (300 aa)). Residues 1474-1497 (IVTRQAFDIIIMVLICLNMITMMV) form a helical membrane-spanning segment. At 1498-1508 (ETDGQSEEKTK) the chain is on the extracellular side. Residues 1509–1532 (ILGRINQFFVAVFTGECVMKMFAL) traverse the membrane as a helical segment. At 1533 to 1538 (RQYYFT) the chain is on the cytoplasmic side. Residues 1539-1562 (NGWNVFDFIVVILSIGSLVFSAIL) form a helical membrane-spanning segment. At 1563–1574 (KSLESYFSPTLF) the chain is on the extracellular side. A helical; Voltage-sensor transmembrane segment spans residues 1575–1596 (RVIRLARIGRILRLIRAAKGIR). The Cytoplasmic portion of the chain corresponds to 1597–1611 (TLLFALMMSLPALFN). Residues 1612–1634 (IGLLLFLVMFIYSIFGMASFANV) traverse the membrane as a helical segment. Residues 1635–1648 (VEEAGIDDMFNFQT) lie on the Extracellular side of the membrane. Positions 1649 to 1671 (FGNSMLCLFQITTSAGWDGLLSP) form an intramembrane region, pore-forming. Residues 1672–1699 (ILNTGPPYCDPNLSNNNTSKGNCGSPTV) are Extracellular-facing. Residues 1700-1724 (GIVFFTTYIIISFLIVVNMYIAVIL) form a helical membrane-spanning segment. At 1725-1959 (ENFNVATEES…SKEGDSPGPQ (235 aa)) the chain is on the cytoplasmic side. The region spanning 1853–1882 (EDISATVIQKAYRSYVLQRSLTLSNPLRVP) is the IQ domain. Positions 1901–1959 (ANDSGRLPDKSETTSATSFPPSYDSVTRGLSDRVNISTSNSMHNEDEVTSKEGDSPGPQ) are disordered. Residues 1943-1959 (HNEDEVTSKEGDSPGPQ) are compositionally biased toward basic and acidic residues.

The protein belongs to the sodium channel (TC 1.A.1.10) family. Nav1.8/SCN10A subfamily. As to quaternary structure, the channel consists of an ion conducting pore forming alpha-subunit regulated by one or more associated auxiliary subunits SCN1B, SCN2B and SCN3B; electrophysiological properties may vary depending on the type of the associated beta subunits. Found in a number of complexes with PRX, DYNLT1 and PDZD2. Interacts with proteins such as FSTL1, PRX, DYNLT1, PDZD2, S100A10 and many others. Interacts with NEDD4 and NEDD4L. Post-translationally, ubiquitinated by NEDD4L; which promotes its endocytosis. In terms of processing, phosphorylation at Ser-1453 by PKC in a highly conserved cytoplasmic loop slows inactivation of the sodium channel and reduces peak sodium currents. Lacks the cysteine which covalently binds the conotoxin GVIIJ. This cysteine (position 816) is speculated in other sodium channel subunits alpha to be implied in covalent binding with the sodium channel subunit beta-2 or beta-4.

The protein localises to the cell membrane. The enzyme catalyses Na(+)(in) = Na(+)(out). Tetrodotoxin-resistant channel that mediates the voltage-dependent sodium ion permeability of excitable membranes. Assuming opened or closed conformations in response to the voltage difference across the membrane, the protein forms a sodium-selective channel through which sodium ions may pass in accordance with their electrochemical gradient. Plays a role in neuropathic pain mechanisms. The sequence is that of Sodium channel protein type 10 subunit alpha (Scn10a) from Onychomys torridus (Southern grasshopper mouse).